The chain runs to 2531 residues: Talin (2531 aa).

Residues 87-401 (RPLRVRMMDE…GYIDIILKKK (315 aa)) enclose the FERM domain. Residues 598–621 (GEKLLEAARGLAGAVRHLLKSAEP) form an interaction with VIN1 region. The region spanning 2287–2526 (TDWVDPSDPN…KIRHDKYKRH (240 aa)) is the I/LWEQ domain. Residues 2466–2485 (AAKRSSEEGDDEEVSGGGQE) are disordered.

In terms of assembly, interacts with VIN1 (vinculin); the interaction facilitates VIN1 binding to F-actin.

It is found in the cytoplasm. The protein localises to the cytoskeleton. The protein resides in the cell cortex. In terms of biological role, probably involved in connections of major cytoskeletal structures to the plasma membrane. This Oscarella pearsei (Sponge) protein is Talin.